The sequence spans 851 residues: Internalin J (851 aa).

An N-terminal signal peptide occupies residues 1–25 (MKTTKIVIASLVSLTMVSNPLLTFA). 14 LRR repeats span residues 94–115 (TLTS…EKLT), 116–136 (GLTK…SQNT), 137–157 (NLTY…TPLT), 158–179 (KLTY…QNPL), 180–200 (LTYL…HNTQ), 201–221 (LTEL…TPQT), 222–243 (QLTT…QNKL), 244–263 (LNRL…NQNI), 264–284 (QLTF…TPLT), 285–306 (QLTY…TLSK), 316–325 (DLLEIDLTHN), 338–357 (KIKE…DCQA), 359–368 (GITELDLSQN), and 380–402 (ELTE…NAHI). MucBP domains lie at 506 to 568 (PIKG…SQSV), 576 to 638 (IVAA…AQTV), 647 to 709 (APEK…SQTV), and 717 to 779 (IEAA…AQTV). A disordered region spans residues 786–825 (NTNTDQPLPTKKPTNTTPTKPSNLKTTEVKKASDTLPKTG). Residues 792 to 811 (PLPTKKPTNTTPTKPSNLKT) show a composition bias toward low complexity. An LPXTG sorting signal motif is present at residues 821-825 (LPKTG). Threonine 824 is modified (pentaglycyl murein peptidoglycan amidated threonine). A propeptide spans 825–851 (GDSAPWKSALLGVFLSSTALVIWKKKK) (removed by sortase A).

Belongs to the internalin family. In terms of assembly, nearly full-length mature protein and an internal LRR-containing fragment interact in vitro with human intestinal mucin-2 (MUC2) but not with mucin-1. LRR fragment binding is slightly better at pH 5.5, (the pH of the intestine) than at pH 7.4.

The protein localises to the secreted. Its subcellular location is the cell wall. With respect to regulation, despite being transcribed during bacterial growth in culture the protein is only detected in infected mice. Its function is as follows. Involved in several steps of L.monocytogenes infection by both intravenous and oral infection. Probably acts as an adhesion; upon ectopic expression in L.innocula bacteria adhere better to human cell lines. This Listeria monocytogenes serovar 1/2a (strain ATCC BAA-679 / EGD-e) protein is Internalin J (inlJ).